A 364-amino-acid polypeptide reads, in one-letter code: DNA replication and repair protein RecF (364 aa).

30-37 is an ATP binding site; it reads GNNGMGKT.

The protein belongs to the RecF family.

It localises to the cytoplasm. Its function is as follows. The RecF protein is involved in DNA metabolism; it is required for DNA replication and normal SOS inducibility. RecF binds preferentially to single-stranded, linear DNA. It also seems to bind ATP. In Porphyromonas gingivalis (strain ATCC BAA-308 / W83), this protein is DNA replication and repair protein RecF.